Consider the following 209-residue polypeptide: Peptide methionine sulfoxide reductase MsrA (209 aa).

C14 is a catalytic residue. Positions 183–209 (FSALTTGGNQPGARGGLTNNTCQHPRH) are disordered. The segment covering 199–209 (LTNNTCQHPRH) has biased composition (polar residues).

This sequence belongs to the MsrA Met sulfoxide reductase family.

The catalysed reaction is L-methionyl-[protein] + [thioredoxin]-disulfide + H2O = L-methionyl-(S)-S-oxide-[protein] + [thioredoxin]-dithiol. It catalyses the reaction [thioredoxin]-disulfide + L-methionine + H2O = L-methionine (S)-S-oxide + [thioredoxin]-dithiol. In terms of biological role, has an important function as a repair enzyme for proteins that have been inactivated by oxidation. Catalyzes the reversible oxidation-reduction of methionine sulfoxide in proteins to methionine. This Pseudomonas fluorescens protein is Peptide methionine sulfoxide reductase MsrA.